The sequence spans 189 residues: Crossover junction endodeoxyribonuclease RuvC (189 aa).

Catalysis depends on residues aspartate 12, glutamate 72, and aspartate 147. Positions 12, 72, and 147 each coordinate Mg(2+).

The protein belongs to the RuvC family. In terms of assembly, homodimer which binds Holliday junction (HJ) DNA. The HJ becomes 2-fold symmetrical on binding to RuvC with unstacked arms; it has a different conformation from HJ DNA in complex with RuvA. In the full resolvosome a probable DNA-RuvA(4)-RuvB(12)-RuvC(2) complex forms which resolves the HJ. Mg(2+) is required as a cofactor.

Its subcellular location is the cytoplasm. The enzyme catalyses Endonucleolytic cleavage at a junction such as a reciprocal single-stranded crossover between two homologous DNA duplexes (Holliday junction).. The RuvA-RuvB-RuvC complex processes Holliday junction (HJ) DNA during genetic recombination and DNA repair. Endonuclease that resolves HJ intermediates. Cleaves cruciform DNA by making single-stranded nicks across the HJ at symmetrical positions within the homologous arms, yielding a 5'-phosphate and a 3'-hydroxyl group; requires a central core of homology in the junction. The consensus cleavage sequence is 5'-(A/T)TT(C/G)-3'. Cleavage occurs on the 3'-side of the TT dinucleotide at the point of strand exchange. HJ branch migration catalyzed by RuvA-RuvB allows RuvC to scan DNA until it finds its consensus sequence, where it cleaves and resolves the cruciform DNA. The polypeptide is Crossover junction endodeoxyribonuclease RuvC (Porphyromonas gingivalis (strain ATCC BAA-308 / W83)).